The sequence spans 179 residues: O-acetyl-ADP-ribose deacetylase (179 aa).

Residues Met-1–Gly-175 enclose the Macro domain. Substrate contacts are provided by residues Asp-11 to Ile-12, Asn-25, Gly-33 to Asp-35, and Ser-122 to Tyr-126. Residue Asp-35 is the Proton acceptor of the active site.

Belongs to the MacroD-type family. YmdB subfamily. Homodimer. Interacts with RNase III.

It carries out the reaction 3''-O-acetyl-ADP-D-ribose + H2O = ADP-D-ribose + acetate + H(+). It catalyses the reaction 2''-O-acetyl-ADP-D-ribose + H2O = ADP-D-ribose + acetate + H(+). Deacetylates O-acetyl-ADP ribose to yield ADP-ribose and free acetate. Down-regulates ribonuclease 3 (RNase III) activity. Acts by interacting directly with the region of the ribonuclease that is required for dimerization/activation. The polypeptide is O-acetyl-ADP-ribose deacetylase (Salmonella gallinarum (strain 287/91 / NCTC 13346)).